Here is a 530-residue protein sequence, read N- to C-terminus: T-box transcription factor TBX21 (530 aa).

The segment at 1 to 55 (MGIVEPGCGDMLTGTEPMPSDEGRGPGADQQHRFFYPEPGAQDPTDRRAGSSLGT) is disordered. A Phosphoserine modification is found at serine 52. Threonine 55 carries the phosphothreonine modification. 2 positions are modified to phosphotyrosine: tyrosine 76 and tyrosine 117. The segment at residues 140–325 (LSNHLLWSKF…NNPFAKGFRE (186 aa)) is a DNA-binding region (T-box). Position 219 is a phosphotyrosine; by ABL1 (tyrosine 219). A Phosphoserine modification is found at serine 224. Phosphotyrosine; by ABL1 is present on tyrosine 265. Phosphothreonine is present on threonine 302. Tyrosine 304 carries the phosphotyrosine; by ABL1 modification. Lysine 313 is covalently cross-linked (Glycyl lysine isopeptide (Lys-Gly) (interchain with G-Cter in ubiquitin)). A disordered region spans residues 444–530 (AGWFRPMRTL…EGQFYNYFPN (87 aa)). Positions 462–482 (SEEQGSSPSLWPEVTSLQPEP) are enriched in polar residues. Positions 498-515 (SPYPSSGDSSSPAGAPSP) are enriched in low complexity. Serine 508 carries the post-translational modification Phosphoserine. Tyrosine 525 bears the Phosphotyrosine; by ITK mark.

In terms of assembly, interacts with RUNX1 and RUNX3. Interacts with ITK. The phosphorylated form (at Tyr-525) interacts with GATA3. Interacts with ABL1. Interacts with RELA. The phosphorylated form (at Thr-302) interacts with NFATC2. Interacts with KDM6B. Interacts with SMARCA4 in a KDM6B-dependent manner. Interacts with CCTN1 and CDK9. Interacts with USP10. Post-translationally, phosphorylations at Ser-52, Tyr-76, Ser-224 and Ser-508 are regulated by mTORC1. Phosphorylation at Tyr-525 is essential for its interaction GATA3. Phosphorylation at Tyr-219, Tyr-265 and Tyr-304 enhances its transcriptional activator activity. Phosphorylation at Thr-302 is required for its interaction with NFATC2. In terms of processing, ubiquitinated at Lys-313, leading to its degradation by the proteasome. Ubiquitination is essential for controlling protein stability, binding to the T-box-binding element of the IFN-gamma promoter, and for interaction with NFATC2 through induction of phosphorylation at Thr-302. Deubiquitinated by USP10 leading to its stabilization. As to expression, T-cell specific. Expressed in regulatory T (TReg) cells.

The protein localises to the nucleus. Its function is as follows. Lineage-defining transcription factor which initiates Th1 lineage development from naive Th precursor cells both by activating Th1 genetic programs and by repressing the opposing Th2 and Th17 genetic programs. Activates transcription of a set of genes important for Th1 cell function, including those encoding IFN-gamma and the chemokine receptor CXCR3. Activates IFNG and CXCR3 genes in part by recruiting chromatin remodeling complexes including KDM6B, a SMARCA4-containing SWI/SNF-complex, and an H3K4me2-methyltransferase complex to their promoters and all of these complexes serve to establish a more permissive chromatin state conducive with transcriptional activation. Can activate Th1 genes also via recruitment of Mediator complex and P-TEFb (composed of CDK9 and CCNT1/cyclin-T1) in the form of the super elongation complex (SEC) to super-enhancers and associated genes in activated Th1 cells. Inhibits the Th17 cell lineage commitment by blocking RUNX1-mediated transactivation of Th17 cell-specific transcriptinal regulator RORC. Inhibits the Th2 cell lineage commitment by suppressing the production of Th2 cytokines, such as IL-4, IL-5, and IL- 13, via repression of transcriptional regulators GATA3 and NFATC2. Protects Th1 cells from amplifying aberrant type-I IFN response in an IFN-gamma abundant microenvironment by acting as a repressor of type-I IFN transcription factors and type-I IFN- stimulated genes. Acts as a regulator of antiviral B-cell responses; controls chronic viral infection by promoting the antiviral antibody IgG2a isotype switching and via regulation of a broad antiviral gene expression program. This chain is T-box transcription factor TBX21 (Tbx21), found in Mus musculus (Mouse).